We begin with the raw amino-acid sequence, 170 residues long: Probable T4-type lysozyme 2 (170 aa).

Residue Glu13 is the Proton donor of the active site. Asp22 serves as the catalytic Nucleophile.

This sequence belongs to the glycosyl hydrolase 24 family.

It catalyses the reaction Hydrolysis of (1-&gt;4)-beta-linkages between N-acetylmuramic acid and N-acetyl-D-glucosamine residues in a peptidoglycan and between N-acetyl-D-glucosamine residues in chitodextrins.. This is Probable T4-type lysozyme 2 from Dictyostelium discoideum (Social amoeba).